A 203-amino-acid polypeptide reads, in one-letter code: Octanoyltransferase (203 aa).

A BPL/LPL catalytic domain is found at 30-203 (EDQDNYFFIT…HIIKEGRKLV (174 aa)). Substrate contacts are provided by residues 69 to 76 (RGGSVTFH), 135 to 137 (SVG), and 148 to 150 (GIS). Residue Cys166 is the Acyl-thioester intermediate of the active site.

This sequence belongs to the LipB family.

The protein resides in the cytoplasm. The enzyme catalyses octanoyl-[ACP] + L-lysyl-[protein] = N(6)-octanoyl-L-lysyl-[protein] + holo-[ACP] + H(+). The protein operates within protein modification; protein lipoylation via endogenous pathway; protein N(6)-(lipoyl)lysine from octanoyl-[acyl-carrier-protein]: step 1/2. Catalyzes the transfer of endogenously produced octanoic acid from octanoyl-acyl-carrier-protein onto the lipoyl domains of lipoate-dependent enzymes. Lipoyl-ACP can also act as a substrate although octanoyl-ACP is likely to be the physiological substrate. This is Octanoyltransferase from Persephonella marina (strain DSM 14350 / EX-H1).